Here is a 185-residue protein sequence, read N- to C-terminus: Peptide deformylase (185 aa).

Residues Cys-109 and His-152 each coordinate Fe cation. Glu-153 is a catalytic residue. His-156 contributes to the Fe cation binding site.

This sequence belongs to the polypeptide deformylase family. Fe(2+) is required as a cofactor.

The enzyme catalyses N-terminal N-formyl-L-methionyl-[peptide] + H2O = N-terminal L-methionyl-[peptide] + formate. Its function is as follows. Removes the formyl group from the N-terminal Met of newly synthesized proteins. Requires at least a dipeptide for an efficient rate of reaction. N-terminal L-methionine is a prerequisite for activity but the enzyme has broad specificity at other positions. In Roseiflexus sp. (strain RS-1), this protein is Peptide deformylase.